A 239-amino-acid polypeptide reads, in one-letter code: uncharacterized protein (239 aa).

The protein localises to the endoplasmic reticulum. It localises to the golgi apparatus. This is an uncharacterized protein from Schizosaccharomyces pombe (strain 972 / ATCC 24843) (Fission yeast).